We begin with the raw amino-acid sequence, 94 residues long: Co-chaperonin GroES (94 aa).

It belongs to the GroES chaperonin family. As to quaternary structure, heptamer of 7 subunits arranged in a ring. Interacts with the chaperonin GroEL.

Its subcellular location is the cytoplasm. In terms of biological role, together with the chaperonin GroEL, plays an essential role in assisting protein folding. The GroEL-GroES system forms a nano-cage that allows encapsulation of the non-native substrate proteins and provides a physical environment optimized to promote and accelerate protein folding. GroES binds to the apical surface of the GroEL ring, thereby capping the opening of the GroEL channel. The polypeptide is Co-chaperonin GroES (Geobacillus stearothermophilus (Bacillus stearothermophilus)).